Reading from the N-terminus, the 313-residue chain is Beta-ketoacyl-[acyl-carrier-protein] synthase III (313 aa).

Catalysis depends on residues Cys-112 and His-238. An ACP-binding region spans residues 239-243 (QANIR). Asn-268 is a catalytic residue.

Belongs to the thiolase-like superfamily. FabH family. Homodimer.

The protein resides in the cytoplasm. The catalysed reaction is malonyl-[ACP] + acetyl-CoA + H(+) = 3-oxobutanoyl-[ACP] + CO2 + CoA. Its pathway is lipid metabolism; fatty acid biosynthesis. Catalyzes the condensation reaction of fatty acid synthesis by the addition to an acyl acceptor of two carbons from malonyl-ACP. Catalyzes the first condensation reaction which initiates fatty acid synthesis and may therefore play a role in governing the total rate of fatty acid production. Possesses both acetoacetyl-ACP synthase and acetyl transacylase activities. Its substrate specificity determines the biosynthesis of branched-chain and/or straight-chain of fatty acids. The protein is Beta-ketoacyl-[acyl-carrier-protein] synthase III of Staphylococcus epidermidis (strain ATCC 35984 / DSM 28319 / BCRC 17069 / CCUG 31568 / BM 3577 / RP62A).